Here is a 287-residue protein sequence, read N- to C-terminus: Heterodimeric geranylgeranyl pyrophosphate synthase small subunit 2, chloroplastic (287 aa).

Mg(2+) is bound by residues glutamate 103 and aspartate 109. Residues lysine 204, glutamine 241, and lysine 250 each coordinate dimethylallyl diphosphate.

The protein belongs to the FPP/GGPP synthase family. In terms of assembly, part of a heterodimeric geranyl(geranyl)diphosphate synthase. The cofactor is Mg(2+). Mainly expressed in trichomes, and, to a lower extent, in roots, leaves, flowers and stems.

It is found in the plastid. The protein localises to the chloroplast thylakoid membrane. Heterodimeric geranyl(geranyl)-diphosphate (GPP) synthase small subunit. The small subunit alone is inactive in vitro while the large subunit GGPPS1 catalyzes mainly the production of geranygeranyl-diphosphate in vitro. Upon association of the two subunits, the product profile changes and the production of gerany-diphosphate is strongly increased. The protein is Heterodimeric geranylgeranyl pyrophosphate synthase small subunit 2, chloroplastic of Cannabis sativa (Hemp).